Reading from the N-terminus, the 156-residue chain is FAD synthase (156 aa).

ATP is bound by residues 16 to 17 (TF), 21 to 24 (HPGH), Asp-101, and Tyr-129.

Belongs to the archaeal FAD synthase family. In terms of assembly, homodimer. It depends on a divalent metal cation as a cofactor.

The catalysed reaction is FMN + ATP + H(+) = FAD + diphosphate. It functions in the pathway cofactor biosynthesis; FAD biosynthesis; FAD from FMN: step 1/1. Its function is as follows. Catalyzes the transfer of the AMP portion of ATP to flavin mononucleotide (FMN) to produce flavin adenine dinucleotide (FAD) coenzyme. The polypeptide is FAD synthase (Methanococcus aeolicus (strain ATCC BAA-1280 / DSM 17508 / OCM 812 / Nankai-3)).